The primary structure comprises 273 residues: 2,3,4,5-tetrahydropyridine-2,6-dicarboxylate N-succinyltransferase (273 aa).

The substrate site is built by Arg-104 and Asp-141.

It belongs to the transferase hexapeptide repeat family. In terms of assembly, homotrimer.

Its subcellular location is the cytoplasm. It carries out the reaction (S)-2,3,4,5-tetrahydrodipicolinate + succinyl-CoA + H2O = (S)-2-succinylamino-6-oxoheptanedioate + CoA. It participates in amino-acid biosynthesis; L-lysine biosynthesis via DAP pathway; LL-2,6-diaminopimelate from (S)-tetrahydrodipicolinate (succinylase route): step 1/3. The sequence is that of 2,3,4,5-tetrahydropyridine-2,6-dicarboxylate N-succinyltransferase from Neisseria meningitidis serogroup C (strain 053442).